Here is a 277-residue protein sequence, read N- to C-terminus: Caspase-3 (277 aa).

M1 is subject to N-acetylmethionine. 2 consecutive propeptides follow at residues 1 to 9 and 10 to 28; these read MENSENSVD and AKSI…KSMD. K11 is modified (N6-acetyllysine). Position 26 is a phosphoserine (S26). Active-site residues include H121 and C163. Position 163 is an S-nitrosocysteine; in inhibited form (C163).

It belongs to the peptidase C14A family. As to quaternary structure, heterotetramer that consists of two anti-parallel arranged heterodimers, each one formed by a 17 kDa (p17) and a 12 kDa (p12) subunit. Interacts with BIRC6/bruce. In terms of processing, cleavage by granzyme B, caspase-6, caspase-8 and caspase-10 generates the two active subunits. Additional processing of the propeptides is likely due to the autocatalytic activity of the activated protease. Active heterodimers between the small subunit of caspase-7 protease and the large subunit of caspase-3 also occur and vice versa. Post-translationally, S-nitrosylated on its catalytic site cysteine in unstimulated cell lines and denitrosylated upon activation of the Fas apoptotic pathway, associated with an increase in intracellular caspase activity. Fas therefore activates caspase-3 not only by inducing the cleavage of the caspase zymogen to its active subunits, but also by stimulating the denitrosylation of its active site thiol. Ubiquitinated by BIRC6; this activity is inhibited by DIABLO/SMAC.

It localises to the cytoplasm. The catalysed reaction is Strict requirement for an Asp residue at positions P1 and P4. It has a preferred cleavage sequence of Asp-Xaa-Xaa-Asp-|- with a hydrophobic amino-acid residue at P2 and a hydrophilic amino-acid residue at P3, although Val or Ala are also accepted at this position.. Inhibited by BIRC6; following inhibition of BIRC6-caspase binding by DIABLO/SMAC, BIRC6 is subjected to caspase cleavage, leading to an increase in active caspases. Involved in the activation cascade of caspases responsible for apoptosis execution. At the onset of apoptosis, it proteolytically cleaves poly(ADP-ribose) polymerase PARP1 at a '216-Asp-|-Gly-217' bond. Cleaves and activates sterol regulatory element binding proteins (SREBPs) between the basic helix-loop-helix leucine zipper domain and the membrane attachment domain. Cleaves and activates caspase-6, -7 and -9 (CASP6, CASP7 and CASP9, respectively). Cleaves and inactivates interleukin-18 (IL18). Triggers cell adhesion in sympathetic neurons through RET cleavage. Cleaves IL-1 beta between an Asp and an Ala, releasing the mature cytokine which is involved in a variety of inflammatory processes. Cleaves and inhibits serine/threonine-protein kinase AKT1 in response to oxidative stress. Acts as an inhibitor of type I interferon production during virus-induced apoptosis by mediating cleavage of antiviral proteins CGAS, IRF3 and MAVS, thereby preventing cytokine overproduction. Also involved in pyroptosis by mediating cleavage and activation of gasdermin-E (GSDME). Cleaves XRCC4 and phospholipid scramblase proteins XKR4, XKR8 and XKR9, leading to promote phosphatidylserine exposure on apoptotic cell surface. Cleaves BIRC6 following inhibition of BIRC6-caspase binding by DIABLO/SMAC. The polypeptide is Caspase-3 (CASP3) (Felis catus (Cat)).